The sequence spans 199 residues: Ribonuclease P protein subunit p25 (199 aa).

A compositionally biased stretch (basic and acidic residues) spans Met-1–Glu-11. Disordered stretches follow at residues Met-1–Phe-28 and Leu-144–Ala-199. The span at Tyr-151 to Ala-166 shows a compositional bias: pro residues. Phosphoserine is present on residues Ser-172 and Ser-182.

Belongs to the histone-like Alba family. In terms of assembly, component of nuclear RNase P and RNase MRP ribonucleoproteins. RNase P consists of a catalytic RNA moiety and 10 different protein chains; POP1, POP4, POP5, POP7, RPP14, RPP21, RPP25, RPP30, RPP38 and RPP40. Within the RNase P complex, POP1, POP7 and RPP25 form the 'finger' subcomplex, POP5, RPP14, RPP40 and homodimeric RPP30 form the 'palm' subcomplex, and RPP21, POP4 and RPP38 form the 'wrist' subcomplex. All subunits of the RNase P complex interact with the catalytic RNA. Several subunits of RNase P are also part of the RNase MRP complex. RNase MRP consists of a catalytic RNA moiety and about 8 protein subunits; POP1, POP7, RPP25, RPP30, RPP38, RPP40 and possibly also POP4 and POP5. POP7 forms a heterodimer with RPP25 that binds to the P3 stem loop of the catalytic RNA.

The protein localises to the nucleus. It is found in the nucleolus. Its function is as follows. Component of ribonuclease P, a ribonucleoprotein complex that generates mature tRNA molecules by cleaving their 5'-ends. Also a component of the MRP ribonuclease complex, which cleaves pre-rRNA sequences. The protein is Ribonuclease P protein subunit p25 (RPP25) of Homo sapiens (Human).